The following is a 490-amino-acid chain: Protein nucleotidyltransferase YdiU (490 aa).

G86, G88, R89, K109, D121, G122, R172, and R179 together coordinate ATP. D248 functions as the Proton acceptor in the catalytic mechanism. Mg(2+) contacts are provided by N249 and D258. An ATP-binding site is contributed by D258.

Belongs to the SELO family. Requires Mg(2+) as cofactor. The cofactor is Mn(2+).

It catalyses the reaction L-seryl-[protein] + ATP = 3-O-(5'-adenylyl)-L-seryl-[protein] + diphosphate. The catalysed reaction is L-threonyl-[protein] + ATP = 3-O-(5'-adenylyl)-L-threonyl-[protein] + diphosphate. It carries out the reaction L-tyrosyl-[protein] + ATP = O-(5'-adenylyl)-L-tyrosyl-[protein] + diphosphate. The enzyme catalyses L-histidyl-[protein] + UTP = N(tele)-(5'-uridylyl)-L-histidyl-[protein] + diphosphate. It catalyses the reaction L-seryl-[protein] + UTP = O-(5'-uridylyl)-L-seryl-[protein] + diphosphate. The catalysed reaction is L-tyrosyl-[protein] + UTP = O-(5'-uridylyl)-L-tyrosyl-[protein] + diphosphate. Its function is as follows. Nucleotidyltransferase involved in the post-translational modification of proteins. It can catalyze the addition of adenosine monophosphate (AMP) or uridine monophosphate (UMP) to a protein, resulting in modifications known as AMPylation and UMPylation. This Rhizobium meliloti (strain 1021) (Ensifer meliloti) protein is Protein nucleotidyltransferase YdiU.